The primary structure comprises 141 residues: Nucleoside diphosphate kinase (141 aa).

ATP is bound by residues K11, F59, R87, T93, R104, and N114. Catalysis depends on H117, which acts as the Pros-phosphohistidine intermediate.

This sequence belongs to the NDK family. In terms of assembly, homotetramer. Requires Mg(2+) as cofactor.

The protein localises to the cytoplasm. The catalysed reaction is a 2'-deoxyribonucleoside 5'-diphosphate + ATP = a 2'-deoxyribonucleoside 5'-triphosphate + ADP. The enzyme catalyses a ribonucleoside 5'-diphosphate + ATP = a ribonucleoside 5'-triphosphate + ADP. Functionally, major role in the synthesis of nucleoside triphosphates other than ATP. The ATP gamma phosphate is transferred to the NDP beta phosphate via a ping-pong mechanism, using a phosphorylated active-site intermediate. This chain is Nucleoside diphosphate kinase, found in Haemophilus influenzae (strain ATCC 51907 / DSM 11121 / KW20 / Rd).